The following is a 473-amino-acid chain: MASCVGSRTLSKDDVNYKMHFRMINEQQVEDITIDFFYRPHTITLLSFTIVSLMYFAFTRDDSVPEDNIWRGILSVIFFFLIISVLAFPNGPFTRPHPALWRMVFGLSVLYFLFLVFLLFLNFEQVKSLMYWLDPNLRYATREADVMEYAVNCHVITWERIISHFDIFAFGHFWGWAMKALLIRSYGLCWTISITWELTELFFMHLLPNFAECWWDQVILDILLCNGGGIWLGMVVCRFLEMRTYHWASFKDIHTTTGKIKRAVLQFTPASWTYVRWFDPKSSFQRVAGVYLFMIIWQLTELNTFFLKHIFVFQASHPLSWGRILFIGGITAPTVRQYYAYLTDTQCKRVGTQCWVFGVIGFLEAIVCIKFGQDLFSKTQILYVVLWLLCVAFTTFLCLYGMIWYAEHYGHREKTYSECEDGTYSPEISWHHRKGTKGSEDSPPKHAGNNESHSSRRRNRHSKSKVTNGVGKK.

N-acetylalanine is present on A2. Residues 2–35 are Cytoplasmic-facing; it reads ASCVGSRTLSKDDVNYKMHFRMINEQQVEDITID. The helical transmembrane segment at 36–56 threads the bilayer; that stretch reads FFYRPHTITLLSFTIVSLMYF. Over 57 to 72 the chain is Lumenal; that stretch reads AFTRDDSVPEDNIWRG. A helical membrane pass occupies residues 73–93; sequence ILSVIFFFLIISVLAFPNGPF. Residues 94–102 are Cytoplasmic-facing; sequence TRPHPALWR. A helical transmembrane segment spans residues 103 to 123; the sequence is MVFGLSVLYFLFLVFLLFLNF. Over 124-186 the chain is Lumenal; that stretch reads EQVKSLMYWL…AMKALLIRSY (63 aa). The helical transmembrane segment at 187 to 207 threads the bilayer; it reads GLCWTISITWELTELFFMHLL. The Cytoplasmic portion of the chain corresponds to 208–216; it reads PNFAECWWD. The chain crosses the membrane as a helical span at residues 217-237; it reads QVILDILLCNGGGIWLGMVVC. Residues 238–286 are Lumenal-facing; that stretch reads RFLEMRTYHWASFKDIHTTTGKIKRAVLQFTPASWTYVRWFDPKSSFQR. Residues 287 to 307 traverse the membrane as a helical segment; it reads VAGVYLFMIIWQLTELNTFFL. At 308–319 the chain is on the cytoplasmic side; it reads KHIFVFQASHPL. Residues 320–342 form a helical membrane-spanning segment; the sequence is SWGRILFIGGITAPTVRQYYAYL. Residues 343–355 lie on the Lumenal side of the membrane; the sequence is TDTQCKRVGTQCW. The helical transmembrane segment at 356–376 threads the bilayer; the sequence is VFGVIGFLEAIVCIKFGQDLF. The Cytoplasmic portion of the chain corresponds to 377–383; it reads SKTQILY. Residues 384–404 traverse the membrane as a helical segment; that stretch reads VVLWLLCVAFTTFLCLYGMIW. Over 405 to 473 the chain is Lumenal; sequence YAEHYGHREK…SKVTNGVGKK (69 aa). S417, S425, S442, and S454 each carry phosphoserine. The disordered stretch occupies residues 430-473; sequence WHHRKGTKGSEDSPPKHAGNNESHSSRRRNRHSKSKVTNGVGKK. Positions 455–464 are enriched in basic residues; sequence SRRRNRHSKS.

It belongs to the phosphatidyl serine synthase family.

The protein localises to the endoplasmic reticulum membrane. The enzyme catalyses a 1,2-diacyl-sn-glycero-3-phosphoethanolamine + L-serine = a 1,2-diacyl-sn-glycero-3-phospho-L-serine + ethanolamine. The catalysed reaction is a 1,2-diacyl-sn-glycero-3-phosphocholine + L-serine = a 1,2-diacyl-sn-glycero-3-phospho-L-serine + choline. It functions in the pathway phospholipid metabolism; phosphatidylserine biosynthesis. Its activity is regulated as follows. Requires calcium ions. Inhibited by exogenous phosphatidylserine. In terms of biological role, catalyzes a base-exchange reaction in which the polar head group of phosphatidylethanolamine (PE) or phosphatidylcholine (PC) is replaced by L-serine. Catalyzes mainly the conversion of phosphatidylcholine. Also converts, in vitro and to a lesser extent, phosphatidylethanolamine. The chain is Phosphatidylserine synthase 1 (PTDSS1) from Homo sapiens (Human).